The chain runs to 432 residues: Negative regulator of systemic acquired resistance SNI1 (432 aa).

As to quaternary structure, interacts with SSN2. Binds to NTL9/CBNAC to promote its binding to promoters of target genes. Component of the SMC5-SMC6 complex which consists at least of SMC5 and SMC6B. Interacts with RAD17. Expressed at low levels in the veins.

The protein localises to the nucleus. Its function is as follows. Component of the SMC5-SMC6 complex, a complex involved in repair of DNA double-strand breaks by homologous recombination. Transcription repressor that prevents expression of pathogenesis-related genes (PR) via histone modifications and binding negative cis-acting elements at their promoters. Negative regulator of hypersensitive response (HR) and systemic acquired resistance (SAR) required to dampen the basal expression of pathogenesis related (PR) genes. Functions synergistically with NTL9/CBNAC as negative regulator of pathogen-induced PR1 expression and basal resistance to a virulent strain of P.syringae. Binds to the PR1 gene promoter to suppress defense response in the absence of pathogen challenge and is removed in response to induction. Negatively regulates both gene expression and DNA recombination during pathogen infection, thus being involved in short-term defense response and a long-term survival strategy. Prevents effective immune responses that involve activation of DNA damage responses, probably by negatively regulating the DNA damage sensors RAD17 and ATR. Negative regulator of defenses against the beet cyst nematode H.schachtii. This chain is Negative regulator of systemic acquired resistance SNI1, found in Arabidopsis thaliana (Mouse-ear cress).